A 25-amino-acid polypeptide reads, in one-letter code: Caerin-1.10 (25 aa).

At leucine 25 the chain carries Leucine amide.

Belongs to the frog skin active peptide (FSAP) family. Caerin subfamily. As to expression, expressed by the skin dorsal glands.

It localises to the secreted. Antibacterial peptide with wide spectrum of activity. The chain is Caerin-1.10 from Litoria rothii (Roth's tree frog).